We begin with the raw amino-acid sequence, 318 residues long: NAC domain-containing protein 68 (318 aa).

The NAC domain maps to 21-175; the sequence is LPPGFRFHPT…EWVLCRLYNK (155 aa).

Expressed in stems, leaf blades and callus. Weakly expressed in developing flowers.

Its subcellular location is the nucleus. Probable transcription factor involved in stress response. This chain is NAC domain-containing protein 68, found in Oryza sativa subsp. japonica (Rice).